The chain runs to 160 residues: Lipoprotein signal peptidase (160 aa).

2 helical membrane-spanning segments follow: residues 60–80 (TEWL…AFFL) and 84–104 (LPFL…AGTI). Catalysis depends on residues Asp-118 and Asp-132. Residues 127 to 147 (TFNMADSCLTLGIIWLVLLYL) form a helical membrane-spanning segment.

Belongs to the peptidase A8 family.

It is found in the cell membrane. It catalyses the reaction Release of signal peptides from bacterial membrane prolipoproteins. Hydrolyzes -Xaa-Yaa-Zaa-|-(S,diacylglyceryl)Cys-, in which Xaa is hydrophobic (preferably Leu), and Yaa (Ala or Ser) and Zaa (Gly or Ala) have small, neutral side chains.. Its pathway is protein modification; lipoprotein biosynthesis (signal peptide cleavage). Functionally, this protein specifically catalyzes the removal of signal peptides from prolipoproteins. The protein is Lipoprotein signal peptidase of Dehalococcoides mccartyi (strain ATCC BAA-2266 / KCTC 15142 / 195) (Dehalococcoides ethenogenes (strain 195)).